Consider the following 140-residue polypeptide: Small ribosomal subunit protein eS17y (140 aa).

Belongs to the eukaryotic ribosomal protein eS17 family.

The sequence is that of Small ribosomal subunit protein eS17y (RPS17B) from Arabidopsis thaliana (Mouse-ear cress).